The sequence spans 227 residues: Cytidylate kinase (227 aa).

12-20 serves as a coordination point for ATP; the sequence is GPSGAGKGT.

It belongs to the cytidylate kinase family. Type 1 subfamily.

It localises to the cytoplasm. It catalyses the reaction CMP + ATP = CDP + ADP. The catalysed reaction is dCMP + ATP = dCDP + ADP. The polypeptide is Cytidylate kinase (Xanthomonas axonopodis pv. citri (strain 306)).